A 757-amino-acid polypeptide reads, in one-letter code: Polyribonucleotide nucleotidyltransferase (757 aa).

Positions 531 and 537 each coordinate Mg(2+). Positions 597 to 656 (PRVTTIRVPVDKIGEVIGPKGKIINAITEETGAQISIEDDGTVFVGATDGPSAQAAIDRI) constitute a KH domain. The region spanning 668 to 737 (GERFLGTVVK…KRGKISLVLV (70 aa)) is the S1 motif domain.

It belongs to the polyribonucleotide nucleotidyltransferase family. Requires Mg(2+) as cofactor.

Its subcellular location is the cytoplasm. The catalysed reaction is RNA(n+1) + phosphate = RNA(n) + a ribonucleoside 5'-diphosphate. Functionally, involved in mRNA degradation. Catalyzes the phosphorolysis of single-stranded polyribonucleotides processively in the 3'- to 5'-direction. This is Polyribonucleotide nucleotidyltransferase from Mycolicibacterium paratuberculosis (strain ATCC BAA-968 / K-10) (Mycobacterium paratuberculosis).